The chain runs to 210 residues: Large ribosomal subunit protein uL3 (210 aa).

Basic residues predominate over residues glycine 132–proline 144. Residues glycine 132–proline 152 form a disordered region.

The protein belongs to the universal ribosomal protein uL3 family. In terms of assembly, part of the 50S ribosomal subunit. Forms a cluster with proteins L14 and L19.

Its function is as follows. One of the primary rRNA binding proteins, it binds directly near the 3'-end of the 23S rRNA, where it nucleates assembly of the 50S subunit. The polypeptide is Large ribosomal subunit protein uL3 (Heliobacterium modesticaldum (strain ATCC 51547 / Ice1)).